Consider the following 313-residue polypeptide: Homoserine O-acetyltransferase (313 aa).

The active-site Acyl-thioester intermediate is C142. The substrate site is built by K163 and S191. Catalysis depends on H234, which acts as the Proton acceptor. The active site involves E236. R248 is a substrate binding site.

Belongs to the MetA family.

Its subcellular location is the cytoplasm. It carries out the reaction L-homoserine + acetyl-CoA = O-acetyl-L-homoserine + CoA. It functions in the pathway amino-acid biosynthesis; L-methionine biosynthesis via de novo pathway; O-acetyl-L-homoserine from L-homoserine: step 1/1. In terms of biological role, transfers an acetyl group from acetyl-CoA to L-homoserine, forming acetyl-L-homoserine. The protein is Homoserine O-acetyltransferase of Streptococcus gordonii (strain Challis / ATCC 35105 / BCRC 15272 / CH1 / DL1 / V288).